A 122-amino-acid chain; its full sequence is MAEMTVELVAVERRLWSGSATLVSAQTTEGEIGVMPGHEPVLGQLVEGGVVAITTADGERIVAAVHGGFLSVTAKTVTILAESADLAEDIDVEAAKAVLAESGDDLEAIAVAKGRVRAVERA.

The protein belongs to the ATPase epsilon chain family. In terms of assembly, F-type ATPases have 2 components, CF(1) - the catalytic core - and CF(0) - the membrane proton channel. CF(1) has five subunits: alpha(3), beta(3), gamma(1), delta(1), epsilon(1). CF(0) has three main subunits: a, b and c.

It localises to the cell membrane. Produces ATP from ADP in the presence of a proton gradient across the membrane. This chain is ATP synthase epsilon chain, found in Rhodococcus opacus (strain B4).